Here is a 206-residue protein sequence, read N- to C-terminus: Ribosomal RNA small subunit methyltransferase G (206 aa).

S-adenosyl-L-methionine contacts are provided by residues G71, F76, A122–E123, and R135.

The protein belongs to the methyltransferase superfamily. RNA methyltransferase RsmG family.

The protein resides in the cytoplasm. Functionally, specifically methylates the N7 position of a guanine in 16S rRNA. The chain is Ribosomal RNA small subunit methyltransferase G from Bacteroides fragilis (strain ATCC 25285 / DSM 2151 / CCUG 4856 / JCM 11019 / LMG 10263 / NCTC 9343 / Onslow / VPI 2553 / EN-2).